Reading from the N-terminus, the 362-residue chain is Dihydroorotate dehydrogenase (quinone) (362 aa).

FMN contacts are provided by residues 62–66 (AGYDK) and Thr86. Residue Lys66 participates in substrate binding. 111 to 115 (NRLGF) is a binding site for substrate. FMN contacts are provided by Asn139 and Asn170. Residue Asn170 participates in substrate binding. Ser173 functions as the Nucleophile in the catalytic mechanism. Asn175 is a substrate binding site. Residues Lys215 and Ser243 each contribute to the FMN site. A substrate-binding site is contributed by 244–245 (NT). Residues Gly266, Gly295, and 316–317 (YS) contribute to the FMN site.

This sequence belongs to the dihydroorotate dehydrogenase family. Type 2 subfamily. As to quaternary structure, monomer. FMN serves as cofactor.

The protein localises to the cell membrane. It catalyses the reaction (S)-dihydroorotate + a quinone = orotate + a quinol. The protein operates within pyrimidine metabolism; UMP biosynthesis via de novo pathway; orotate from (S)-dihydroorotate (quinone route): step 1/1. Its function is as follows. Catalyzes the conversion of dihydroorotate to orotate with quinone as electron acceptor. This Rhizobium leguminosarum bv. trifolii (strain WSM2304) protein is Dihydroorotate dehydrogenase (quinone).